The chain runs to 495 residues: ATP synthase subunit beta, chloroplastic (495 aa).

172–179 (GGAGVGKT) contacts ATP.

This sequence belongs to the ATPase alpha/beta chains family. In terms of assembly, F-type ATPases have 2 components, CF(1) - the catalytic core - and CF(0) - the membrane proton channel. CF(1) has five subunits: alpha(3), beta(3), gamma(1), delta(1), epsilon(1). CF(0) has four main subunits: a(1), b(1), b'(1) and c(9-12).

Its subcellular location is the plastid. The protein localises to the chloroplast thylakoid membrane. The catalysed reaction is ATP + H2O + 4 H(+)(in) = ADP + phosphate + 5 H(+)(out). Its function is as follows. Produces ATP from ADP in the presence of a proton gradient across the membrane. The catalytic sites are hosted primarily by the beta subunits. In Brimeura amethystina (Spanish hyacinth), this protein is ATP synthase subunit beta, chloroplastic.